A 730-amino-acid polypeptide reads, in one-letter code: Ribosomal RNA large subunit methyltransferase K/L (730 aa).

A THUMP domain is found at 46–157 (TAYRLCVWSR…RGEAILSLDL (112 aa)). The tract at residues 394 to 418 (GERREAQPEGTEARQQVPQASEPAR) is disordered.

Belongs to the methyltransferase superfamily. RlmKL family.

It localises to the cytoplasm. The enzyme catalyses guanosine(2445) in 23S rRNA + S-adenosyl-L-methionine = N(2)-methylguanosine(2445) in 23S rRNA + S-adenosyl-L-homocysteine + H(+). It carries out the reaction guanosine(2069) in 23S rRNA + S-adenosyl-L-methionine = N(2)-methylguanosine(2069) in 23S rRNA + S-adenosyl-L-homocysteine + H(+). In terms of biological role, specifically methylates the guanine in position 2445 (m2G2445) and the guanine in position 2069 (m7G2069) of 23S rRNA. This chain is Ribosomal RNA large subunit methyltransferase K/L, found in Pseudomonas putida (strain ATCC 47054 / DSM 6125 / CFBP 8728 / NCIMB 11950 / KT2440).